We begin with the raw amino-acid sequence, 357 residues long: DNA polymerase IV (357 aa).

Residues 4–185 (IIHCDCDCFY…LPVERLFGVG (182 aa)) form the UmuC domain. Residues aspartate 8 and aspartate 103 each coordinate Mg(2+). Glutamate 104 is an active-site residue.

This sequence belongs to the DNA polymerase type-Y family. Monomer. It depends on Mg(2+) as a cofactor.

The protein localises to the cytoplasm. The enzyme catalyses DNA(n) + a 2'-deoxyribonucleoside 5'-triphosphate = DNA(n+1) + diphosphate. Functionally, poorly processive, error-prone DNA polymerase involved in untargeted mutagenesis. Copies undamaged DNA at stalled replication forks, which arise in vivo from mismatched or misaligned primer ends. These misaligned primers can be extended by PolIV. Exhibits no 3'-5' exonuclease (proofreading) activity. May be involved in translesional synthesis, in conjunction with the beta clamp from PolIII. In Ralstonia nicotianae (strain ATCC BAA-1114 / GMI1000) (Ralstonia solanacearum), this protein is DNA polymerase IV.